A 268-amino-acid polypeptide reads, in one-letter code: Shikimate dehydrogenase (NADP(+)) (268 aa).

Shikimate contacts are provided by residues 13–15 (SLS) and T60. Catalysis depends on K64, which acts as the Proton acceptor. E76 provides a ligand contact to NADP(+). Residues N85 and D100 each coordinate shikimate. NADP(+) contacts are provided by residues 124 to 128 (GAGGA), 148 to 153 (NRTMAR), and I209. Position 211 (Y211) interacts with shikimate. Residue G232 participates in NADP(+) binding.

The protein belongs to the shikimate dehydrogenase family. Homodimer.

The catalysed reaction is shikimate + NADP(+) = 3-dehydroshikimate + NADPH + H(+). It functions in the pathway metabolic intermediate biosynthesis; chorismate biosynthesis; chorismate from D-erythrose 4-phosphate and phosphoenolpyruvate: step 4/7. In terms of biological role, involved in the biosynthesis of the chorismate, which leads to the biosynthesis of aromatic amino acids. Catalyzes the reversible NADPH linked reduction of 3-dehydroshikimate (DHSA) to yield shikimate (SA). The chain is Shikimate dehydrogenase (NADP(+)) from Staphylococcus aureus (strain MSSA476).